The sequence spans 802 residues: Epithelial sodium channel subunit delta (802 aa).

Topologically, residues 1–250 are cytoplasmic; it reads MRAVLSQKTT…CSRGNRLKTT (250 aa). The segment at 145–211 is disordered; it reads KQPHGGALTS…PPPPKEGHQE (67 aa). Over residues 166 to 176 the composition is skewed to basic residues; the sequence is CHLKGWQHRPT. The span at 192 to 205 shows a compositional bias: pro residues; sequence PPRPGPPSAPPPPP. A helical transmembrane segment spans residues 251-271; that stretch reads SWGLLSLGALVALCWQLGLLF. The Extracellular portion of the chain corresponds to 272–694; the sequence is ERHWHRPVLM…VPQLLSAMGS (423 aa). Residues asparagine 330 and asparagine 548 are each glycosylated (N-linked (GlcNAc...) asparagine). The helical transmembrane segment at 695–715 threads the bilayer; sequence LCSLWFGASVLSLLELLELLL. The Cytoplasmic segment spans residues 716–802; sequence DASALTLVLG…GPQPLETLDT (87 aa). A disordered region spans residues 738–777; sequence RASPASGASSIKPEASQMPPPAGGTSDDPEPSGPHLPRVM.

The protein belongs to the amiloride-sensitive sodium channel (TC 1.A.6) family. SCNN1D subfamily. As to quaternary structure, can form an alternative heterotrimeric epithelial sodium channel (ENaC), composed of a delta (SCNN1D), beta (SCNN1B), and gamma (SCNN1G) subunit, where the delta (SCNN1D) subunit replaces the alpha (SCNN1A) subunit. Not specifically expressed in epithelial cells.

The protein resides in the apical cell membrane. It catalyses the reaction Na(+)(in) = Na(+)(out). Its activity is regulated as follows. Originally identified and characterized by its inhibition by the diuretic drug amiloride. Its function is as follows. Potential alternative pore-forming subunit of the epithelial sodium channel (ENaC), capable of replacing the alpha/SCNN1A subunit, creating a more active channel with distinct properties. ENaC functions in epithelial tissues, where it facilitates the electrodiffusion of sodium ions from the extracellular fluid through the apical membrane of cells, with water following osmotically, regulating sodium balance and fluid homeostasis. This subunit could also function independently as a sodium channel or assemble into other tissue-specific heterotrimeric sodium channels. ENaC channels including this isoform exhibit greater conductance. This Homo sapiens (Human) protein is Epithelial sodium channel subunit delta.